The chain runs to 443 residues: Serine/threonine-protein kinase Nek2 (443 aa).

The 264-residue stretch at 8 to 271 folds into the Protein kinase domain; sequence YEVLHSIGTG…VEEILESPLI (264 aa). ATP-binding positions include 14 to 22 and K37; that span reads IGTGSYGRC. D141 (proton acceptor) is an active-site residue. T170 is modified (phosphothreonine; by autocatalysis). Phosphoserine; by autocatalysis is present on S171. A phosphothreonine; by autocatalysis mark is found at T175 and T179. The residue at position 184 (S184) is a Phosphoserine. Residue S241 is modified to Phosphoserine; by autocatalysis. The segment at 264-443 is interaction with PCNT; the sequence is EILESPLIAD…LKSRQILGMR (180 aa). Residues 282-292 show a composition bias toward basic and acidic residues; that stretch reads NLERRGRRSGE. Residues 282–303 are disordered; sequence NLERRGRRSGEPSKLPDSSPVL. The residue at position 300 (S300) is a Phosphoserine. The segment at 301-443 is interaction with CEP85; it reads PVLSELKLKE…LKSRQILGMR (143 aa). A coiled-coil region spans residues 303–361; it reads LSELKLKERQLQDREQALRAREDILEQKERELCIRERLAEDKLARAESLMKNYSLLKEH. The interval 306 to 334 is leucine-zipper; it reads LKLKERQLQDREQALRAREDILEQKEREL. Residues 329–443 form a necessary for interaction with MAD1L1 region; sequence QKERELCIRE…LKSRQILGMR (115 aa). The interval 333–370 is required for microtubule binding and for localization to the centrosomes; it reads ELCIRERLAEDKLARAESLMKNYSLLKEHRLLCLAGGP. A Phosphoserine; by STK3/MST2 modification is found at S356. The segment at 383-402 is disordered; sequence VHFHGESKENTARSENSESY. Over residues 385–398 the composition is skewed to basic and acidic residues; it reads FHGESKENTARSEN. Residues S389, S396, and S401 each carry the phosphoserine modification. Residues 402 to 437 are interaction with SAV1 and STK3/MST2; sequence YLAKSKCRDLKKRLHAAQLRAQALADIEKNYQLKSR. A coiled-coil region spans residues 403-427; sequence LAKSKCRDLKKRLHAAQLRAQALAD. S436 carries the phosphoserine; by STK3/MST2 modification.

The protein belongs to the protein kinase superfamily. NEK Ser/Thr protein kinase family. NIMA subfamily. In terms of assembly, forms homodimers and heterodimers. Interacts with CDC20, CTNB1, MAD1L1, MAD2L1, MAPK, NEK11, NPM1, NDC80, PCNT, PPP1CA, PPP1CC and SGO1. Interacts with STK3/MST2 (via SARAH domain) and SAV1 (via SARAH domain). Interacts with NECAB3 and HMGA2. Interacts with CEP68; the interaction leads to phosphorylation of CEP68. Interacts with CNTLN; the interaction leads to phosphorylation of CNTLN. Interacts with CEP85. The cofactor is Mg(2+). In terms of processing, activated by autophosphorylation. Protein phosphatase 1 represses autophosphorylation and activation of isoform 1 by dephosphorylation. Phosphorylation by STK3/MST2 is necessary for its localization to the centrosome. As to expression, most abundantly expressed in testis. Low levels found in mid-gestation embryo, ovary, placenta, intestine, thymus and skin. Within the testis, expression restricted to germ cells with highest levels detected in spermatocytes at pachytene and diplotene stages. Also expressed in meiotic pachytene oocytes.

The protein localises to the nucleus. It localises to the nucleolus. It is found in the cytoplasm. The protein resides in the cytoskeleton. Its subcellular location is the microtubule organizing center. The protein localises to the centrosome. It localises to the spindle pole. It is found in the chromosome. The protein resides in the centromere. Its subcellular location is the kinetochore. The enzyme catalyses L-seryl-[protein] + ATP = O-phospho-L-seryl-[protein] + ADP + H(+). The catalysed reaction is L-threonyl-[protein] + ATP = O-phospho-L-threonyl-[protein] + ADP + H(+). With respect to regulation, its catalytic activity is inhibited by the inhibitor CCT241950. In the presence of this inhibitor, displays an autoinhibited conformation: Tyr-70 side chain points into the active site, interacts with the activation loop, and blocks the alphaC helix. Functionally, protein kinase which is involved in the control of centrosome separation and bipolar spindle formation in mitotic cells and chromatin condensation in meiotic cells. Regulates centrosome separation (essential for the formation of bipolar spindles and high-fidelity chromosome separation) by phosphorylating centrosomal proteins such as CROCC, CEP250 and NINL, resulting in their displacement from the centrosomes. Regulates kinetochore microtubule attachment stability in mitosis via phosphorylation of NDC80. Involved in regulation of mitotic checkpoint protein complex via phosphorylation of CDC20 and MAD2L1. Plays an active role in chromatin condensation during the first meiotic division through phosphorylation of HMGA2. Phosphorylates: PPP1CC; SGO1; NECAB3 and NPM1. Essential for localization of MAD2L1 to kinetochore and MAPK1 and NPM1 to the centrosome. Phosphorylates CEP68 and CNTLN directly or indirectly. NEK2-mediated phosphorylation of CEP68 promotes CEP68 dissociation from the centrosome and its degradation at the onset of mitosis. Phosphorylates and activates NEK11 in G1/S-arrested cells. Involved in the regulation of centrosome disjunction. The chain is Serine/threonine-protein kinase Nek2 (Nek2) from Mus musculus (Mouse).